The primary structure comprises 788 residues: Pre-rRNA-processing protein TSR1 homolog (788 aa).

Residues M1–V40 are disordered. The span at G9–R25 shows a compositional bias: basic residues. Positions T26 to V40 are enriched in basic and acidic residues. Residues A83–K243 form the Bms1-type G domain. The disordered stretch occupies residues L354–I433. A compositionally biased stretch (acidic residues) spans D378 to P412.

The protein belongs to the TRAFAC class translation factor GTPase superfamily. Bms1-like GTPase family. TSR1 subfamily.

The protein localises to the nucleus. The protein resides in the nucleolus. Its function is as follows. Required during maturation of the 40S ribosomal subunit in the nucleolus. This Caenorhabditis briggsae protein is Pre-rRNA-processing protein TSR1 homolog.